The primary structure comprises 227 residues: Cytochrome c oxidase subunit 2 (227 aa).

At 1-14 the chain is on the mitochondrial intermembrane side; sequence MAYPFQLGLQDATS. A helical membrane pass occupies residues 15 to 45; sequence PIMEELLHFHDHTLMIVFLISSLVLYIITLM. At 46 to 59 the chain is on the mitochondrial matrix side; it reads LTTKLTHTSTMDAQ. Residues 60–87 form a helical membrane-spanning segment; it reads EVETVWTILPAIILILIALPSLRILYMM. The Mitochondrial intermembrane segment spans residues 88 to 227; sequence DEINNPSLTV…YFETWSALMV (140 aa). Residues H161, C196, E198, C200, H204, and M207 each coordinate Cu cation. Residue E198 coordinates Mg(2+). A Phosphotyrosine modification is found at Y218.

This sequence belongs to the cytochrome c oxidase subunit 2 family. In terms of assembly, component of the cytochrome c oxidase (complex IV, CIV), a multisubunit enzyme composed of 14 subunits. The complex is composed of a catalytic core of 3 subunits MT-CO1, MT-CO2 and MT-CO3, encoded in the mitochondrial DNA, and 11 supernumerary subunits COX4I, COX5A, COX5B, COX6A, COX6B, COX6C, COX7A, COX7B, COX7C, COX8 and NDUFA4, which are encoded in the nuclear genome. The complex exists as a monomer or a dimer and forms supercomplexes (SCs) in the inner mitochondrial membrane with NADH-ubiquinone oxidoreductase (complex I, CI) and ubiquinol-cytochrome c oxidoreductase (cytochrome b-c1 complex, complex III, CIII), resulting in different assemblies (supercomplex SCI(1)III(2)IV(1) and megacomplex MCI(2)III(2)IV(2)). Found in a complex with TMEM177, COA6, COX18, COX20, SCO1 and SCO2. Interacts with TMEM177 in a COX20-dependent manner. Interacts with COX20. Interacts with COX16. Cu cation is required as a cofactor.

The protein localises to the mitochondrion inner membrane. The enzyme catalyses 4 Fe(II)-[cytochrome c] + O2 + 8 H(+)(in) = 4 Fe(III)-[cytochrome c] + 2 H2O + 4 H(+)(out). In terms of biological role, component of the cytochrome c oxidase, the last enzyme in the mitochondrial electron transport chain which drives oxidative phosphorylation. The respiratory chain contains 3 multisubunit complexes succinate dehydrogenase (complex II, CII), ubiquinol-cytochrome c oxidoreductase (cytochrome b-c1 complex, complex III, CIII) and cytochrome c oxidase (complex IV, CIV), that cooperate to transfer electrons derived from NADH and succinate to molecular oxygen, creating an electrochemical gradient over the inner membrane that drives transmembrane transport and the ATP synthase. Cytochrome c oxidase is the component of the respiratory chain that catalyzes the reduction of oxygen to water. Electrons originating from reduced cytochrome c in the intermembrane space (IMS) are transferred via the dinuclear copper A center (CU(A)) of subunit 2 and heme A of subunit 1 to the active site in subunit 1, a binuclear center (BNC) formed by heme A3 and copper B (CU(B)). The BNC reduces molecular oxygen to 2 water molecules using 4 electrons from cytochrome c in the IMS and 4 protons from the mitochondrial matrix. The sequence is that of Cytochrome c oxidase subunit 2 (MT-CO2) from Vulpes macrotis (Kit fox).